The primary structure comprises 496 residues: Probable cytosol aminopeptidase (496 aa).

Lys268 and Asp273 together coordinate Mn(2+). Lys280 is an active-site residue. The Mn(2+) site is built by Asp291, Asp350, and Glu352. Arg354 is a catalytic residue.

The protein belongs to the peptidase M17 family. Requires Mn(2+) as cofactor.

The protein localises to the cytoplasm. It catalyses the reaction Release of an N-terminal amino acid, Xaa-|-Yaa-, in which Xaa is preferably Leu, but may be other amino acids including Pro although not Arg or Lys, and Yaa may be Pro. Amino acid amides and methyl esters are also readily hydrolyzed, but rates on arylamides are exceedingly low.. The enzyme catalyses Release of an N-terminal amino acid, preferentially leucine, but not glutamic or aspartic acids.. Presumably involved in the processing and regular turnover of intracellular proteins. Catalyzes the removal of unsubstituted N-terminal amino acids from various peptides. In Thioalkalivibrio sulfidiphilus (strain HL-EbGR7), this protein is Probable cytosol aminopeptidase.